A 246-amino-acid polypeptide reads, in one-letter code: MyoD family inhibitor domain-containing protein (246 aa).

2 disordered regions span residues 1–93 and 134–164; these read MSQE…EEET and KIQS…ASPE. Residues 1–170 lie on the Extracellular side of the membrane; that stretch reads MSQEREPFSP…ASPEDGCVHC (170 aa). A compositionally biased stretch (polar residues) spans 63-87; sequence EDNSNSQPIKAQPQRLPQPNTSALE. Residues 74–246 form the MDFI domain; sequence QPQRLPQPNT…MECCGICFPS (173 aa). A helical transmembrane segment spans residues 171–188; it reads ILTCLFCEFLTLCNIVVG. Residues 189–246 are Cytoplasmic-facing; the sequence is QASCGICTSEACCCCCTEEMGDDCNCPCDMDCGIMDACCESSDCLEICMECCGICFPS.

This sequence belongs to the MDFI family. Expressed broadly at a low level in the early embryo.

It localises to the cytoplasm. Its subcellular location is the cell membrane. The protein localises to the secreted. Functionally, required to control the activity of various transcription factors through their sequestration in the cytoplasm. Retains nuclear Zic proteins in the cytoplasm and inhibits their transcriptional activation. Required for dorsoanterior development. Necessary for siamois to activate downstream target genes, including gsc, during execution of the dorsal organizer program. Also regulates the transcriptional activity of TCF7L1/TCF3 by interacting directly with TCF7L1/TCF3 and preventing it from binding DNA. Involved in the development of lymphatic vessel valves. It is required to promote lymphatic endothelial cell migration, in a process that involves down-regulation of integrin beta 1 activation and control of cell adhesion to the extracellular matrix. The polypeptide is MyoD family inhibitor domain-containing protein (Xenopus laevis (African clawed frog)).